A 134-amino-acid polypeptide reads, in one-letter code: Protein NrdI (134 aa).

This sequence belongs to the NrdI family.

Functionally, probably involved in ribonucleotide reductase function. The sequence is that of Protein NrdI from Serratia proteamaculans (strain 568).